A 126-amino-acid chain; its full sequence is uncharacterized protein (126 aa).

Positions 1 to 27 (MKNLFIFLSLMMMFVLTACGGSKYDDA) are cleaved as a signal peptide. The tract at residues 93-126 (MTDMPGNGENDRLGLSKKTPDYEEVKGEETELEE) is disordered. Basic and acidic residues predominate over residues 101-126 (ENDRLGLSKKTPDYEEVKGEETELEE).

This is an uncharacterized protein from Bacillus subtilis (strain 168).